The chain runs to 480 residues: uncharacterized protein (480 aa).

An N-terminal signal peptide occupies residues 1-21 (MSRYFSFFFLALFLHYRIIVA). Disordered stretches follow at residues 38–72 (SSHLLHHSLPPPLLTQSHSSLSDPDPEPEPSSAEC) and 116–147 (SPLITENGTHADPKTPDLKTSSEAQGDTNDQT). Residues 51 to 60 (LTQSHSSLSD) show a composition bias toward low complexity. Polar residues predominate over residues 133–144 (LKTSSEAQGDTN). A helical membrane pass occupies residues 153 to 173 (YAVEIACVCFLIALAINYFVG). Residues 404–480 (QARNKTESGR…VPKMKMSRSH (77 aa)) are disordered. Residues 407–465 (NKTESGRQKAAEEAYKELHNARQEALQKKKAEKKKMMEEAEAKMSAEVIRKKEAKERAR) are compositionally biased toward basic and acidic residues. Positions 411 to 467 (SGRQKAAEEAYKELHNARQEALQKKKAEKKKMMEEAEAKMSAEVIRKKEAKERARQV) form a coiled coil. Basic residues predominate over residues 466–480 (QVKKAVPKMKMSRSH).

Its subcellular location is the membrane. This is an uncharacterized protein from Arabidopsis thaliana (Mouse-ear cress).